Reading from the N-terminus, the 382-residue chain is Alkane 1-monooxygenase 2 (382 aa).

Transmembrane regions (helical) follow at residues 17 to 37, 45 to 65, 88 to 108, and 114 to 134; these read GYLA…FVGV, WAWF…YLVG, VSAI…GHIF, and GLLG…IIAI. Residues His138, His142, His168, His172, and His173 each contribute to the Fe cation site. A helical membrane pass occupies residues 236–256; that stretch reads ALFAATFGLLWGWQGVVFFLG. Positions 312, 315, and 316 each coordinate Fe cation.

This sequence belongs to the fatty acid desaturase type 1 family. AlkB subfamily. The cofactor is Fe(3+).

It localises to the cell inner membrane. It carries out the reaction octane + 2 reduced [rubredoxin] + O2 + 2 H(+) = 2 oxidized [rubredoxin] + octan-1-ol + H2O. It functions in the pathway hydrocarbon metabolism; alkane degradation. Its function is as follows. Catalyzes the hydroxylation of n-alkanes in the presence of a NADH-rubredoxin reductase and rubredoxin. It preferably hydroxylases C8-C16 hydrocarbons. This Alcanivorax borkumensis (strain ATCC 700651 / DSM 11573 / NCIMB 13689 / SK2) protein is Alkane 1-monooxygenase 2 (alkB2).